A 147-amino-acid chain; its full sequence is Acidic phospholipase A2 S3-24 (147 aa).

An N-terminal signal peptide occupies residues 1–19; sequence MYPAHLLVLLAVCVSLLGA. Residues 20-27 constitute a propeptide that is removed on maturation; it reads SDMPPQPL. 7 cysteine pairs are disulfide-bonded: cysteine 38–cysteine 99, cysteine 54–cysteine 146, cysteine 56–cysteine 72, cysteine 71–cysteine 127, cysteine 78–cysteine 120, cysteine 88–cysteine 113, and cysteine 106–cysteine 118. Residues tyrosine 55, glycine 57, and glycine 59 each coordinate Ca(2+). Histidine 75 is an active-site residue. Aspartate 76 is a binding site for Ca(2+). The active site involves aspartate 121.

It belongs to the phospholipase A2 family. Group I subfamily. D49 sub-subfamily. Requires Ca(2+) as cofactor. As to expression, expressed by the venom gland.

It localises to the secreted. The enzyme catalyses a 1,2-diacyl-sn-glycero-3-phosphocholine + H2O = a 1-acyl-sn-glycero-3-phosphocholine + a fatty acid + H(+). Its function is as follows. Snake venom phospholipase A2 (PLA2) that inhibits collagen-induced platelet aggregation. PLA2 catalyzes the calcium-dependent hydrolysis of the 2-acyl groups in 3-sn-phosphoglycerides. In Austrelaps superbus (Lowland copperhead snake), this protein is Acidic phospholipase A2 S3-24.